The chain runs to 134 residues: Large ribosomal subunit protein uL16c (134 aa).

It belongs to the universal ribosomal protein uL16 family. In terms of assembly, part of the 50S ribosomal subunit.

It is found in the plastid. The protein resides in the chloroplast. The polypeptide is Large ribosomal subunit protein uL16c (Nephroselmis olivacea (Green alga)).